The sequence spans 183 residues: Large ribosomal subunit protein uL10 (183 aa).

This sequence belongs to the universal ribosomal protein uL10 family. Part of the ribosomal stalk of the 50S ribosomal subunit. The N-terminus interacts with L11 and the large rRNA to form the base of the stalk. The C-terminus forms an elongated spine to which L12 dimers bind in a sequential fashion forming a multimeric L10(L12)X complex.

Its function is as follows. Forms part of the ribosomal stalk, playing a central role in the interaction of the ribosome with GTP-bound translation factors. This is Large ribosomal subunit protein uL10 from Mesomycoplasma hyopneumoniae (strain 232) (Mycoplasma hyopneumoniae).